We begin with the raw amino-acid sequence, 531 residues long: Peptide chain release factor 3 (531 aa).

The 269-residue stretch at 10 to 278 (RRRRTFAIIS…SLIDWAPAPK (269 aa)) folds into the tr-type G domain. GTP-binding positions include 19–26 (SHPDAGKT), 87–91 (DTPGH), and 141–144 (NKYD).

Belongs to the TRAFAC class translation factor GTPase superfamily. Classic translation factor GTPase family. PrfC subfamily.

Its subcellular location is the cytoplasm. Its function is as follows. Increases the formation of ribosomal termination complexes and stimulates activities of RF-1 and RF-2. It binds guanine nucleotides and has strong preference for UGA stop codons. It may interact directly with the ribosome. The stimulation of RF-1 and RF-2 is significantly reduced by GTP and GDP, but not by GMP. The sequence is that of Peptide chain release factor 3 from Neisseria meningitidis serogroup B (strain ATCC BAA-335 / MC58).